A 451-amino-acid chain; its full sequence is tRNA-2-methylthio-N(6)-dimethylallyladenosine synthase (451 aa).

Positions 3 to 120 (KKLFIQTHGC…LPEMVNAAGK (118 aa)) constitute an MTTase N-terminal domain. Cys-12, Cys-49, Cys-83, Cys-156, Cys-160, and Cys-163 together coordinate [4Fe-4S] cluster. In terms of domain architecture, Radical SAM core spans 142–374 (RVEGAEAFVS…QRRISQQAYD (233 aa)). A TRAM domain is found at 377 to 441 (LSMVGEVQRI…PNSLLGELVG (65 aa)).

Belongs to the methylthiotransferase family. MiaB subfamily. Monomer. It depends on [4Fe-4S] cluster as a cofactor.

Its subcellular location is the cytoplasm. It catalyses the reaction N(6)-dimethylallyladenosine(37) in tRNA + (sulfur carrier)-SH + AH2 + 2 S-adenosyl-L-methionine = 2-methylsulfanyl-N(6)-dimethylallyladenosine(37) in tRNA + (sulfur carrier)-H + 5'-deoxyadenosine + L-methionine + A + S-adenosyl-L-homocysteine + 2 H(+). Functionally, catalyzes the methylthiolation of N6-(dimethylallyl)adenosine (i(6)A), leading to the formation of 2-methylthio-N6-(dimethylallyl)adenosine (ms(2)i(6)A) at position 37 in tRNAs that read codons beginning with uridine. In Marinomonas sp. (strain MWYL1), this protein is tRNA-2-methylthio-N(6)-dimethylallyladenosine synthase.